The chain runs to 419 residues: UDP-N-acetylglucosamine 1-carboxyvinyltransferase 1 (419 aa).

22 to 23 serves as a coordination point for phosphoenolpyruvate; that stretch reads KN. Residue Arg-92 coordinates UDP-N-acetyl-alpha-D-glucosamine. The active-site Proton donor is the Cys-116. The residue at position 116 (Cys-116) is a 2-(S-cysteinyl)pyruvic acid O-phosphothioketal. Residues 121-125, Asp-306, and Ile-328 contribute to the UDP-N-acetyl-alpha-D-glucosamine site; that span reads RPIDL.

It belongs to the EPSP synthase family. MurA subfamily.

Its subcellular location is the cytoplasm. It catalyses the reaction phosphoenolpyruvate + UDP-N-acetyl-alpha-D-glucosamine = UDP-N-acetyl-3-O-(1-carboxyvinyl)-alpha-D-glucosamine + phosphate. The protein operates within cell wall biogenesis; peptidoglycan biosynthesis. Its function is as follows. Cell wall formation. Adds enolpyruvyl to UDP-N-acetylglucosamine. In Streptococcus agalactiae serotype Ia (strain ATCC 27591 / A909 / CDC SS700), this protein is UDP-N-acetylglucosamine 1-carboxyvinyltransferase 1.